The following is a 396-amino-acid chain: NAD(P)H oxidoreductase RTN4IP1, mitochondrial (396 aa).

The N-terminal 40 residues, 1 to 40 (MGVLKTCVLRRSACAAACFWRRTVIPKPPFRGISTTSARS), are a transit peptide targeting the mitochondrion. Residues 52–393 (GKNEVLRFTQ…RGHARGKTVV (342 aa)) form the Enoyl reductase (ER) domain. Positions 214, 216, 217, 237, 255, 276, 300, 341, 343, 386, 387, and 388 each coordinate NADPH.

It belongs to the zinc-containing alcohol dehydrogenase family. Quinone oxidoreductase subfamily. In terms of assembly, interacts with RTN4, UQCRC1 and UQCRC2. Widely expressed in mitochondria-enriched tissues. Found in heart, kidney, liver, brain and spinal cord.

It localises to the mitochondrion matrix. The protein resides in the mitochondrion outer membrane. It carries out the reaction a 3-demethylubiquinone + NADH + 2 H(+) = a 3-demethylubiquinol + NAD(+). It catalyses the reaction a 3-demethylubiquinone + NADPH + 2 H(+) = a 3-demethylubiquinol + NADP(+). The catalysed reaction is 3-demethylubiquinone-10 + NADH + 2 H(+) = 3-demethylubiquinol-10 + NAD(+). The enzyme catalyses 3-demethylubiquinone-10 + NADPH + 2 H(+) = 3-demethylubiquinol-10 + NADP(+). Its pathway is cofactor biosynthesis; ubiquinone biosynthesis. Functionally, NAD(P)H oxidoreductase involved in the ubiquinone biosynthetic pathway. Required for the O-methyltransferase activity of COQ3. Able to catalyze the oxidoreduction of 3-demethylubiquinone into 3-demethylubiquinol in vitro. However, it is unclear if 3-demethylubiquinone constitutes a substrate in vivo. May also play a role in the regulation of retinal ganglion cell (RGC) neurite outgrowth, and hence in the development of the inner retina and optic nerve. Appears to be a potent inhibitor of regeneration following spinal cord injury. The sequence is that of NAD(P)H oxidoreductase RTN4IP1, mitochondrial from Mus musculus (Mouse).